Here is a 398-residue protein sequence, read N- to C-terminus: Lysophospholipid transporter LplT (398 aa).

The next 12 helical transmembrane spans lie at 16–36 (MIAVICAQFLSAFGDNALLFA), 53–73 (ILQMAFVATYIILAPFVGQVA), 91–111 (AGALVICFGFNPFLGYTLVGV), 139–159 (LMEASTIAAILIGSVAGGILA), 163–183 (IVAALAVCAVVYAAAVIANLY), 195–213 (SWTPRAMTQAFFNACVVLW), 227–247 (LFWGAGVTLRFLLVLWVPVAL), 253–273 (ATPTLLNAMVAVGIVIGAGAA), 286–306 (MPAGILIGVAVAIFALQTTLF), 310–330 (ALLLIIGVLGGFFVVPLNALL), 344–364 (IAVQNLGENTAMLLMLGLYSL), and 372–392 (VVGVGIGFGVVFALAISALWL).

Belongs to the major facilitator superfamily. LplT (TC 2.A.1.42) family.

Its subcellular location is the cell inner membrane. Functionally, catalyzes the facilitated diffusion of 2-acyl-glycero-3-phosphoethanolamine (2-acyl-GPE) into the cell. In Serratia proteamaculans (strain 568), this protein is Lysophospholipid transporter LplT.